The primary structure comprises 469 residues: 3-isopropylmalate dehydratase large subunit (469 aa).

[4Fe-4S] cluster is bound by residues cysteine 349, cysteine 410, and cysteine 413.

This sequence belongs to the aconitase/IPM isomerase family. LeuC type 1 subfamily. In terms of assembly, heterodimer of LeuC and LeuD. Requires [4Fe-4S] cluster as cofactor.

The catalysed reaction is (2R,3S)-3-isopropylmalate = (2S)-2-isopropylmalate. It functions in the pathway amino-acid biosynthesis; L-leucine biosynthesis; L-leucine from 3-methyl-2-oxobutanoate: step 2/4. In terms of biological role, catalyzes the isomerization between 2-isopropylmalate and 3-isopropylmalate, via the formation of 2-isopropylmaleate. The sequence is that of 3-isopropylmalate dehydratase large subunit from Azoarcus sp. (strain BH72).